A 202-amino-acid chain; its full sequence is ATP-dependent Clp protease proteolytic subunit (202 aa).

Ser-101 functions as the Nucleophile in the catalytic mechanism. Residue His-126 is part of the active site.

It belongs to the peptidase S14 family. Component of the chloroplastic Clp protease core complex.

It localises to the plastid. It is found in the chloroplast stroma. It carries out the reaction Hydrolysis of proteins to small peptides in the presence of ATP and magnesium. alpha-casein is the usual test substrate. In the absence of ATP, only oligopeptides shorter than five residues are hydrolyzed (such as succinyl-Leu-Tyr-|-NHMec, and Leu-Tyr-Leu-|-Tyr-Trp, in which cleavage of the -Tyr-|-Leu- and -Tyr-|-Trp bonds also occurs).. Its function is as follows. Cleaves peptides in various proteins in a process that requires ATP hydrolysis. Has a chymotrypsin-like activity. Plays a major role in the degradation of misfolded proteins. The sequence is that of ATP-dependent Clp protease proteolytic subunit from Acorus calamus (Sweet flag).